A 127-amino-acid polypeptide reads, in one-letter code: Large ribosomal subunit protein bL17 (127 aa).

Belongs to the bacterial ribosomal protein bL17 family. As to quaternary structure, part of the 50S ribosomal subunit. Contacts protein L32.

In Vibrio vulnificus (strain CMCP6), this protein is Large ribosomal subunit protein bL17.